An 82-amino-acid chain; its full sequence is Teratocyte protein CftICK-IV (82 aa).

The signal sequence occupies residues 1 to 21; the sequence is MAKILLTFIILTCLIVTITPA.

In terms of processing, contains 4 disulfide bonds. As to expression, abundantly expressed by teratocytes, which are extra-embryonic cells released by parasitoid wasps into their hosts during larval eclosion.

It is found in the secreted. Functionally, this endoparasitoid wasp peptide has immununosuppressive and insecticidal activities. Suppress cellular immunity which is detectable as a reduction of hemocyte spread index in the host. In vivo, ingestion of this peptide moderately reduces leaf consumption of D.saccharalis, a permissive host for the lepidoptere C.flavipes. This chain is Teratocyte protein CftICK-IV, found in Cotesia flavipes (Parasitic wasp).